Consider the following 94-residue polypeptide: Large ribosomal subunit protein uL23 (94 aa).

This sequence belongs to the universal ribosomal protein uL23 family. In terms of assembly, part of the 50S ribosomal subunit. Contacts protein L29, and trigger factor when it is bound to the ribosome.

Functionally, one of the early assembly proteins it binds 23S rRNA. One of the proteins that surrounds the polypeptide exit tunnel on the outside of the ribosome. Forms the main docking site for trigger factor binding to the ribosome. In Ligilactobacillus salivarius (strain UCC118) (Lactobacillus salivarius), this protein is Large ribosomal subunit protein uL23.